A 548-amino-acid chain; its full sequence is Probable zinc metalloprotease EGY1, chloroplastic (548 aa).

Residues 1–18 constitute a chloroplast transit peptide; the sequence is MGTLTSVAFAAAVNIRFR. Residues 61–76 are compositionally biased toward basic and acidic residues; the sequence is NSNRDDSIGENGETHK. Residues 61 to 116 are disordered; sequence NSNRDDSIGENGETHKSSVVKTATFEEEDEETSKSSSTTSSSNEFGSDKTSMPSTI. Polar residues predominate over residues 103 to 116; that stretch reads NEFGSDKTSMPSTI. 8 helical membrane-spanning segments follow: residues 242–262, 290–310, 326–346, 361–381, 388–408, 416–436, 474–494, and 516–536; these read YVIA…LGIA, LYPF…ILLF, LSIP…ITQF, LAGP…GLFL, ANDL…LGLI, AALH…WCGL, MLGL…YVLI, and ALVG…WDEL.

It belongs to the peptidase M50B family. In terms of tissue distribution, expressed in roots, leaves, cotyledons, hypocotyls, stems, flowers and siliques.

The protein resides in the plastid. It is found in the chloroplast membrane. Its function is as follows. Membrane-associated and ATP-independent metalloprotease required for development of both thylakoid grana and well-organized lamellae in chloroplast. Required for the accumulation of chlorophyll and chlorophyll a/b binding (CAB) proteins (from both PS I and PS II) in chloroplast membranes, and for grana formation and normal chloroplast development. Involved in the regulation of nuclear gene expression in response to ammonium stress and interacts with ABA signaling. Carries out beta-casein degradation in an ATP-independent manner in vitro. The polypeptide is Probable zinc metalloprotease EGY1, chloroplastic (EGY1) (Arabidopsis thaliana (Mouse-ear cress)).